A 219-amino-acid polypeptide reads, in one-letter code: UPF0173 metal-dependent hydrolase LSL_0324 (219 aa).

This sequence belongs to the UPF0173 family.

The sequence is that of UPF0173 metal-dependent hydrolase LSL_0324 from Ligilactobacillus salivarius (strain UCC118) (Lactobacillus salivarius).